The chain runs to 68 residues: Large ribosomal subunit protein bL35 (68 aa).

The protein belongs to the bacterial ribosomal protein bL35 family.

The protein is Large ribosomal subunit protein bL35 of Onion yellows phytoplasma (strain OY-M).